The following is a 168-amino-acid chain: NADH dehydrogenase [ubiquinone] 1 alpha subcomplex assembly factor 2 (168 aa).

The disordered stretch occupies residues 112 to 168 (GKETSEELLPSPTATQVKGHASAPYFGREEPSVAPTSTGKTFQPGSWTPEDGKRQSQ). Phosphoserine is present on S133. Residues 145 to 157 (APTSTGKTFQPGS) are compositionally biased toward polar residues.

Belongs to the complex I NDUFA12 subunit family. As to quaternary structure, interacts with ARMC9.

The protein localises to the mitochondrion. Acts as a molecular chaperone for mitochondrial complex I assembly. Complex I functions in the transfer of electrons from NADH to the respiratory chain. The immediate electron acceptor for the enzyme is believed to be ubiquinone. Is involved in the initial steps of cilia formation, including removal of CP110 from the mother centrioles, docking of membrane vesicles to the mother centrioles, and establishment of the transition zone. In Mus musculus (Mouse), this protein is NADH dehydrogenase [ubiquinone] 1 alpha subcomplex assembly factor 2 (Ndufaf2).